We begin with the raw amino-acid sequence, 306 residues long: Ribose-5-phosphate isomerase (306 aa).

The interval 45–68 (GRAQFGVGSTSTSSGDANSVCPAP) is disordered. Over residues 51-61 (VGSTSTSSGDA) the composition is skewed to polar residues. S102 is modified (phosphoserine).

This sequence belongs to the ribose 5-phosphate isomerase family.

The catalysed reaction is aldehydo-D-ribose 5-phosphate = D-ribulose 5-phosphate. It functions in the pathway carbohydrate degradation; pentose phosphate pathway; D-ribose 5-phosphate from D-ribulose 5-phosphate (non-oxidative stage): step 1/1. This chain is Ribose-5-phosphate isomerase, found in Sus scrofa (Pig).